A 231-amino-acid polypeptide reads, in one-letter code: Flagellar L-ring protein (231 aa).

The N-terminal stretch at 1–18 (MNRLLSLFALGGAVLLAG) is a signal peptide. Cysteine 19 carries N-palmitoyl cysteine lipidation. A lipid anchor (S-diacylglycerol cysteine) is attached at cysteine 19.

Belongs to the FlgH family. As to quaternary structure, the basal body constitutes a major portion of the flagellar organelle and consists of four rings (L,P,S, and M) mounted on a central rod.

The protein localises to the cell outer membrane. Its subcellular location is the bacterial flagellum basal body. Its function is as follows. Assembles around the rod to form the L-ring and probably protects the motor/basal body from shearing forces during rotation. The polypeptide is Flagellar L-ring protein (Pseudomonas putida (strain W619)).